We begin with the raw amino-acid sequence, 293 residues long: Nitrogenase iron protein (293 aa).

10–17 is an ATP binding site; the sequence is GKGGIGKS. [4Fe-4S] cluster is bound at residue C98. An ADP-ribosylarginine; by dinitrogenase reductase ADP-ribosyltransferase modification is found at R101. C133 serves as a coordination point for [4Fe-4S] cluster.

Belongs to the NifH/BchL/ChlL family. In terms of assembly, homodimer. Requires [4Fe-4S] cluster as cofactor. Post-translationally, the reversible ADP-ribosylation of Arg-101 inactivates the nitrogenase reductase and regulates nitrogenase activity.

The enzyme catalyses N2 + 8 reduced [2Fe-2S]-[ferredoxin] + 16 ATP + 16 H2O = H2 + 8 oxidized [2Fe-2S]-[ferredoxin] + 2 NH4(+) + 16 ADP + 16 phosphate + 6 H(+). Functionally, the key enzymatic reactions in nitrogen fixation are catalyzed by the nitrogenase complex, which has 2 components: the iron protein and the molybdenum-iron protein. The polypeptide is Nitrogenase iron protein (Stutzerimonas stutzeri (strain A1501) (Pseudomonas stutzeri)).